Reading from the N-terminus, the 74-residue chain is Capsid protein VP2 (74 aa).

Its subcellular location is the virion. Its function is as follows. This extremely basic protein may tightly bind to SSV1 DNA. Essential for virus function. The protein is Capsid protein VP2 (VP2) of Saccharolobus solfataricus (Sulfolobus solfataricus).